We begin with the raw amino-acid sequence, 957 residues long: Glycine dehydrogenase (decarboxylating) (957 aa).

Lys-708 carries the post-translational modification N6-(pyridoxal phosphate)lysine.

This sequence belongs to the GcvP family. As to quaternary structure, the glycine cleavage system is composed of four proteins: P, T, L and H. Pyridoxal 5'-phosphate serves as cofactor.

It carries out the reaction N(6)-[(R)-lipoyl]-L-lysyl-[glycine-cleavage complex H protein] + glycine + H(+) = N(6)-[(R)-S(8)-aminomethyldihydrolipoyl]-L-lysyl-[glycine-cleavage complex H protein] + CO2. The glycine cleavage system catalyzes the degradation of glycine. The P protein binds the alpha-amino group of glycine through its pyridoxal phosphate cofactor; CO(2) is released and the remaining methylamine moiety is then transferred to the lipoamide cofactor of the H protein. The polypeptide is Glycine dehydrogenase (decarboxylating) (Escherichia fergusonii (strain ATCC 35469 / DSM 13698 / CCUG 18766 / IAM 14443 / JCM 21226 / LMG 7866 / NBRC 102419 / NCTC 12128 / CDC 0568-73)).